The primary structure comprises 159 residues: Small ribosomal subunit protein uS7m (159 aa).

This sequence belongs to the universal ribosomal protein uS7 family. Part of the small ribosomal subunit.

It is found in the mitochondrion. Functionally, one of the primary rRNA binding proteins, it binds directly to the small rRNA where it nucleates assembly of the head domain of the small subunit. This chain is Small ribosomal subunit protein uS7m (RPS7), found in Reclinomonas americana.